A 59-amino-acid chain; its full sequence is UPF0181 protein YoaH (59 aa).

This sequence belongs to the UPF0181 family.

In Salmonella arizonae (strain ATCC BAA-731 / CDC346-86 / RSK2980), this protein is UPF0181 protein YoaH.